A 627-amino-acid chain; its full sequence is Interferon-induced GTP-binding protein MxB (627 aa).

One can recognise a Dynamin-type G domain in the interval 34-307 (DLALPAIAVI…LVHHIQRSLP (274 aa)). Positions 44–51 (GDQSSGKS) are G1 motif. A GTP-binding site is contributed by 44–51 (GDQSSGKS). The interval 69 to 71 (VTR) is G2 motif. The segment at 145-148 (DLPG) is G3 motif. Residues 145–149 (DLPGI) and 214–217 (TKPD) each bind GTP. The G4 motif stretch occupies residues 214–217 (TKPD). The tract at residues 246-249 (RCRG) is G5 motif. The GED domain maps to 541–627 (LSEMKLHLES…MKAQNLLATY (87 aa)).

This sequence belongs to the TRAFAC class dynamin-like GTPase superfamily. Dynamin/Fzo/YdjA family.

It is found in the cytoplasm. In Danio rerio (Zebrafish), this protein is Interferon-induced GTP-binding protein MxB (mxb).